The primary structure comprises 225 residues: MAKLLLYFLLLTSLSDVFGGTDMSKKTFVFPKETDNSYVSLKAQLKKPLSAFTVCLHIYTELFMTRGYSIFSYATEKEANEILIFWSKDRGYILGVGGIEMPFKAPEIPSAPVHICTSWESVSGIIELWVDGKAQVRKSLQKGYFVGTEAMIILGQDQDSFGGSFDANQSFVGDIGDVNMWDFVLSPKEIDMVYSGGTFSPNVLSWRSLTYETHGEVFIKPQLWP.

A signal peptide spans Met1 to Gly19. The region spanning Ser24–Pro225 is the Pentraxin (PTX) domain. Residues Cys55 and Cys116 are joined by a disulfide bond. Ca(2+)-binding residues include Asn80, Gln158, Asp159, and Gln169.

This sequence belongs to the pentraxin family. In terms of assembly, homopentamer. Pentraxin (or pentaxin) have a discoid arrangement of 5 non-covalently bound subunits. Interacts with FCN1; may regulate monocyte activation by FCN1. Requires Ca(2+) as cofactor. In terms of tissue distribution, found in plasma.

The protein resides in the secreted. Its function is as follows. Displays several functions associated with host defense: it promotes agglutination, bacterial capsular swelling, phagocytosis and complement fixation through its calcium-dependent binding to phosphorylcholine. Can interact with DNA and histones and may scavenge nuclear material released from damaged circulating cells. The polypeptide is C-reactive protein (CRP) (Cavia porcellus (Guinea pig)).